Here is a 473-residue protein sequence, read N- to C-terminus: NAD-dependent protein deacetylase SRT1 (473 aa).

A Deacetylase sirtuin-type domain is found at 27–267; the sequence is SHLLQCKIEE…AGVMESLNMK (241 aa). NAD(+) is bound by residues 52-71 and 114-117; these read GAGISTSCGIPDFRGPKGIW and QNVD. His-134 (proton acceptor) is an active-site residue. Positions 142, 145, 167, and 172 each coordinate Zn(2+). NAD(+)-binding positions include 209–211, 235–237, and Val-253; these read GTS and NLQ. Residues 447-473 are disordered; the sequence is LEGSGTSRKRSRTGKRKSKALAEETKA. Residues 453–465 show a composition bias toward basic residues; the sequence is SRKRSRTGKRKSK.

The protein belongs to the sirtuin family. Class IV subfamily. As to quaternary structure, binds to the promoter region of genes influenced by ethylene. Interacts with ENAP1; this interaction is enhanced in the presence of ethylene. The cofactor is Zn(2+).

It localises to the nucleus. The catalysed reaction is N(6)-acetyl-L-lysyl-[protein] + NAD(+) + H2O = 2''-O-acetyl-ADP-D-ribose + nicotinamide + L-lysyl-[protein]. Functionally, NAD-dependent protein deacetylase. Has deacetylase activity towards H3K9Ac. May have a function in the safeguard against genome instability and DNA damage to ensure plant cell growth. Involved in responses to ethylene leading to the transcriptional repression of some ethylene-responsive genes via the regulation of histone acetylation H3K9Ac. The polypeptide is NAD-dependent protein deacetylase SRT1 (Arabidopsis thaliana (Mouse-ear cress)).